Consider the following 423-residue polypeptide: Adenosylmethionine-8-amino-7-oxononanoate aminotransferase (423 aa).

Substrate is bound at residue tryptophan 51. Residue 111 to 112 (GS) coordinates pyridoxal 5'-phosphate. Tyrosine 144 serves as a coordination point for substrate. Aspartate 243 contributes to the pyridoxal 5'-phosphate binding site. 2 residues coordinate substrate: lysine 272 and glycine 306. Lysine 272 carries the N6-(pyridoxal phosphate)lysine modification. 307 to 308 (PT) lines the pyridoxal 5'-phosphate pocket. Arginine 390 contacts substrate.

It belongs to the class-III pyridoxal-phosphate-dependent aminotransferase family. BioA subfamily. Homodimer. It depends on pyridoxal 5'-phosphate as a cofactor.

It is found in the cytoplasm. It carries out the reaction (8S)-8-amino-7-oxononanoate + S-adenosyl-L-methionine = S-adenosyl-4-methylsulfanyl-2-oxobutanoate + (7R,8S)-7,8-diammoniononanoate. Its pathway is cofactor biosynthesis; biotin biosynthesis; 7,8-diaminononanoate from 8-amino-7-oxononanoate (SAM route): step 1/1. Catalyzes the transfer of the alpha-amino group from S-adenosyl-L-methionine (SAM) to 7-keto-8-aminopelargonic acid (KAPA) to form 7,8-diaminopelargonic acid (DAPA). It is the only aminotransferase known to utilize SAM as an amino donor. The sequence is that of Adenosylmethionine-8-amino-7-oxononanoate aminotransferase from Corynebacterium glutamicum (strain ATCC 13032 / DSM 20300 / JCM 1318 / BCRC 11384 / CCUG 27702 / LMG 3730 / NBRC 12168 / NCIMB 10025 / NRRL B-2784 / 534).